Consider the following 565-residue polypeptide: MEGSTVRSDLIKKGPDRAPHRALLKATGVTDADMGKPFIGIANSYIDIVPGHVHLKEFGDLVKEAVREAGGVPFIFNTIGVDDGIAMGHIGMRYSLPSRELIADAVETVIEAHQLDALICIPNCDKITPGMLMAAMRVNIPTIFISGGPMAAGRLKDGRRADLITIFEGVGAHSRGMISDEELKELEDLACPSCGSCSGMFTANSMNCLCEALGLALPGNGTALARSAEREALARAAARRIVEMALAGGPRPRDIVTPEAIDNAFALDIAMGGSTNTVLHTLAVATEAGIAYPLERINALSARVPYLCKVSPATAEVHIEDVHAAGGVMAILKELSRKEGTLHPHCLTVTGKTIGELWAEAENRNREVIRPVEDPYAETGGLAILFGNLAPDGAALKVGAVDPSITTFTGRAICFDSQDEALQGIFGGRVQPGHVVVIRYEGPKGGPGMPEMLAPTSAIVGMGLGKEVALITDGRFSGGTRGICLGHISPEAAEGGPIALVRDGDVITIDIPGRRLTLEVPADELERRRAAWVKPAPKVRKGWLGRYAALVTSANTGAVLRTPEE.

Aspartate 83 contributes to the Mg(2+) binding site. Cysteine 124 provides a ligand contact to [2Fe-2S] cluster. Mg(2+) is bound by residues aspartate 125 and lysine 126. Lysine 126 carries the post-translational modification N6-carboxylysine. Cysteine 197 serves as a coordination point for [2Fe-2S] cluster. Glutamate 451 contributes to the Mg(2+) binding site. Residue serine 477 is the Proton acceptor of the active site.

The protein belongs to the IlvD/Edd family. Homodimer. The cofactor is [2Fe-2S] cluster. Requires Mg(2+) as cofactor.

The catalysed reaction is (2R)-2,3-dihydroxy-3-methylbutanoate = 3-methyl-2-oxobutanoate + H2O. It carries out the reaction (2R,3R)-2,3-dihydroxy-3-methylpentanoate = (S)-3-methyl-2-oxopentanoate + H2O. The protein operates within amino-acid biosynthesis; L-isoleucine biosynthesis; L-isoleucine from 2-oxobutanoate: step 3/4. Its pathway is amino-acid biosynthesis; L-valine biosynthesis; L-valine from pyruvate: step 3/4. Functions in the biosynthesis of branched-chain amino acids. Catalyzes the dehydration of (2R,3R)-2,3-dihydroxy-3-methylpentanoate (2,3-dihydroxy-3-methylvalerate) into 2-oxo-3-methylpentanoate (2-oxo-3-methylvalerate) and of (2R)-2,3-dihydroxy-3-methylbutanoate (2,3-dihydroxyisovalerate) into 2-oxo-3-methylbutanoate (2-oxoisovalerate), the penultimate precursor to L-isoleucine and L-valine, respectively. This chain is Dihydroxy-acid dehydratase, found in Symbiobacterium thermophilum (strain DSM 24528 / JCM 14929 / IAM 14863 / T).